Reading from the N-terminus, the 737-residue chain is LIMR family protein R05D3.2 (737 aa).

The segment covering 280-293 (ADIEEENSEQSEDV) has biased composition (acidic residues). Residues 280 to 416 (ADIEEENSEQ…PKKPKNPNFD (137 aa)) form a disordered region. The span at 303-318 (ETIHQVDRSDTPHLED) shows a compositional bias: basic and acidic residues.

It belongs to the LIMR family.

In Caenorhabditis elegans, this protein is LIMR family protein R05D3.2.